The sequence spans 119 residues: Small ribosomal subunit protein bS16 (119 aa).

The protein belongs to the bacterial ribosomal protein bS16 family.

The polypeptide is Small ribosomal subunit protein bS16 (Amoebophilus asiaticus (strain 5a2)).